The following is a 73-amino-acid chain: Large ribosomal subunit protein bL31 (73 aa).

It belongs to the bacterial ribosomal protein bL31 family. Type A subfamily. Part of the 50S ribosomal subunit.

In terms of biological role, binds the 23S rRNA. The chain is Large ribosomal subunit protein bL31 from Ruegeria sp. (strain TM1040) (Silicibacter sp.).